Consider the following 186-residue polypeptide: Peptidyl-tRNA hydrolase (186 aa).

Tyrosine 14 provides a ligand contact to tRNA. Residue histidine 19 is the Proton acceptor of the active site. Tyrosine 61, asparagine 63, and asparagine 107 together coordinate tRNA.

Belongs to the PTH family. In terms of assembly, monomer.

The protein resides in the cytoplasm. It catalyses the reaction an N-acyl-L-alpha-aminoacyl-tRNA + H2O = an N-acyl-L-amino acid + a tRNA + H(+). Hydrolyzes ribosome-free peptidyl-tRNAs (with 1 or more amino acids incorporated), which drop off the ribosome during protein synthesis, or as a result of ribosome stalling. Its function is as follows. Catalyzes the release of premature peptidyl moieties from peptidyl-tRNA molecules trapped in stalled 50S ribosomal subunits, and thus maintains levels of free tRNAs and 50S ribosomes. In Helicobacter pylori (strain G27), this protein is Peptidyl-tRNA hydrolase.